We begin with the raw amino-acid sequence, 333 residues long: Fe(3+)-citrate import system permease protein YfmE (333 aa).

A run of 8 helical transmembrane segments spans residues 12 to 32 (LLAILILAVILIVLSVISIGI), 65 to 85 (IILAILAGAGLAAAGAILQGV), 95 to 115 (VVGISKGSGLAAMAVILIFPE), 120 to 140 (VLPFSAFAGAAIIAVLLLMIA), 194 to 214 (EVKLLAPWLLILFPIVCILIP), 238 to 258 (FILIFTAVALAGSCVAVVGSI), 279 to 299 (YLLPASALIGAIILLIADTLG), and 306 to 326 (VEIPAGILTAVIGAPYFLYLL).

It belongs to the binding-protein-dependent transport system permease family. FecCD subfamily. The complex is composed of one ATP-binding protein (YfmF), two transmembrane proteins (YfmD and YfmE) and a solute-binding protein (YfmC).

The protein resides in the cell membrane. Part of the ABC transporter complex YfmCDEF involved in citrate-dependent Fe(3+) import. Involved in the translocation of the substrate across the membrane. This is Fe(3+)-citrate import system permease protein YfmE (yfmE) from Bacillus subtilis (strain 168).